Here is a 654-residue protein sequence, read N- to C-terminus: Sphingosine kinase 2 (654 aa).

A compositionally biased stretch (basic and acidic residues) spans 1 to 17; that stretch reads MNGHLEAEEQQDQRPDQ. A disordered region spans residues 1–28; it reads MNGHLEAEEQQDQRPDQELTGSWGHGPR. The required for binding to sulfatide and phosphoinositides and for membrane localizatione stretch occupies residues 1 to 175; sequence MNGHLEAEEQ…LPGDGEITPD (175 aa). A Nuclear localization signal motif is present at residues 122–130; it reads RGRRGARRR. The DAGKc domain occupies 178–325; the sequence is PRPPRLLLLV…LDLLSVTLAS (148 aa). ATP-binding positions include 188-190 and 220-224; these read NPF and TERQN. 245 to 248 serves as a coordination point for substrate; the sequence is SGDG. Asp247 acts as the Proton donor/acceptor in catalysis. ATP contacts are provided by residues Glu252 and 277 to 279; that span reads GSG. Asp344 is a substrate binding site. ATP is bound by residues Arg351 and Arg357. Residue Ser387 is modified to Phosphoserine; by MAPK. Phosphoserine occurs at positions 393 and 399. The segment at 400-509 is disordered; sequence ELTLTPDPAP…PLPTPDARVG (110 aa). The Nuclear export signal motif lies at 416-425; it reads LHRSVSDLPL. Phosphoserine; by PKD is present on residues Ser419 and Ser421. Gly residues predominate over residues 447–461; sequence NGGGPELAGDWGGAG. Low complexity predominate over residues 462–482; the sequence is DAPLSPDPLLSSPPGSPKAAL. At Ser477 the chain carries Phosphoserine. Residue Thr614 is modified to Phosphothreonine; by MAPK. 622 to 624 contacts ATP; the sequence is DGE.

As to quaternary structure, interacts with histone H3. Interacts with HDAC1, HDAC2, MBD2 and SIN3A. Interacts with EEF1A1; the interaction enhances SPHK2 kinase activity. Interacts with PHB2. Mg(2+) is required as a cofactor. In terms of processing, phosphorylated by PKD on Ser-419 and Ser-421 upon PMA treatment. Phosphorylation induces export from the nucleus to the cytoplasm. Phosphorylated by MAPK1 and MAPK2 at Ser-387 and Thr-614, phosphorylation is induced by agonists such as EGF and PMA and increases kinase activity. Post-translationally, cleaved by CASP1 in apoptotic cells. The truncated form is released from cells. As to expression, mainly expressed in adult kidney, liver, and brain. Expressed in cerebral cortex and hippocampus (at protein level). Isoform 1 is the predominant form expressed in most tissues.

It localises to the cytoplasm. It is found in the nucleus. Its subcellular location is the endoplasmic reticulum. The protein resides in the mitochondrion inner membrane. The protein localises to the lysosome membrane. The enzyme catalyses a sphingoid base + ATP = a sphingoid 1-phosphate + ADP + H(+). The catalysed reaction is sphing-4-enine + ATP = sphing-4-enine 1-phosphate + ADP + H(+). It catalyses the reaction sphinganine + ATP = sphinganine 1-phosphate + ADP + H(+). It carries out the reaction (4R)-hydroxysphinganine + ATP = (4R)-hydroxysphinganine 1-phosphate + ADP + H(+). Its activity is regulated as follows. Inhibited by sulfatide. Kinase activity is increased by phosphorylation by MAPK2 upon PMA or EGF treatments. Its function is as follows. Catalyzes the phosphorylation of sphingosine to form sphingosine-1-phosphate (SPP), a lipid mediator with both intra- and extracellular functions. Also acts on D-erythro-dihydrosphingosine, D-erythro-sphingosine and L-threo-dihydrosphingosine. Binds phosphoinositides. In contrast to prosurvival SPHK1, has a positive effect on intracellular ceramide levels, inhibits cells growth and enhances apoptosis. In mitochondria, is important for cytochrome-c oxidase assembly and mitochondrial respiration. The SPP produced in mitochondria binds PHB2 and modulates the regulation via PHB2 of complex IV assembly and respiration. In nucleus, plays a role in epigenetic regulation of gene expression. Interacts with HDAC1 and HDAC2 and, through SPP production, inhibits their enzymatic activity, preventing the removal of acetyl groups from lysine residues with histones. Up-regulates acetylation of histone H3-K9, histone H4-K5 and histone H2B-K12. In nucleus, may have an inhibitory effect on DNA synthesis and cell cycle. In mast cells, is the main regulator of SPP production which mediates calcium influx, NF-kappa-B activation, cytokine production, such as TNF and IL6, and degranulation of mast cells. In dopaminergic neurons, is involved in promoting mitochondrial functions regulating ATP and ROS levels. Also involved in the regulation of glucose and lipid metabolism. The polypeptide is Sphingosine kinase 2 (Homo sapiens (Human)).